The chain runs to 123 residues: uncharacterized protein (123 aa).

The helical transmembrane segment at L34–L53 threads the bilayer.

It localises to the membrane. This is an uncharacterized protein from Saccharomyces cerevisiae (strain ATCC 204508 / S288c) (Baker's yeast).